We begin with the raw amino-acid sequence, 263 residues long: Phosphonates import ATP-binding protein PhnC 1 (263 aa).

The ABC transporter domain occupies 3–248 (IQVENLWVAF…KEKELYFGEK (246 aa)). Position 37-44 (37-44 (GPSGAGKS)) interacts with ATP.

The protein belongs to the ABC transporter superfamily. Phosphonates importer (TC 3.A.1.9.1) family. The complex is composed of two ATP-binding proteins (PhnC), two transmembrane proteins (PhnE) and a solute-binding protein (PhnD).

Its subcellular location is the cell inner membrane. It carries out the reaction phosphonate(out) + ATP + H2O = phosphonate(in) + ADP + phosphate + H(+). Functionally, part of the ABC transporter complex PhnCDE involved in phosphonates import. Responsible for energy coupling to the transport system. This is Phosphonates import ATP-binding protein PhnC 1 from Synechococcus sp. (strain JA-2-3B'a(2-13)) (Cyanobacteria bacterium Yellowstone B-Prime).